The sequence spans 397 residues: Acetate kinase (397 aa).

Residue asparagine 8 coordinates Mg(2+). Residue lysine 15 coordinates ATP. Substrate is bound at residue arginine 89. The active-site Proton donor/acceptor is the aspartate 146. ATP contacts are provided by residues 206 to 210 (HLGNG), 281 to 283 (DLR), and 329 to 333 (GVGEN). Glutamate 382 serves as a coordination point for Mg(2+).

Belongs to the acetokinase family. As to quaternary structure, homodimer. Requires Mg(2+) as cofactor. It depends on Mn(2+) as a cofactor.

Its subcellular location is the cytoplasm. It catalyses the reaction acetate + ATP = acetyl phosphate + ADP. Its pathway is metabolic intermediate biosynthesis; acetyl-CoA biosynthesis; acetyl-CoA from acetate: step 1/2. Catalyzes the formation of acetyl phosphate from acetate and ATP. Can also catalyze the reverse reaction. The polypeptide is Acetate kinase (Bacillus cereus (strain ATCC 10987 / NRS 248)).